Here is a 1199-residue protein sequence, read N- to C-terminus: Pyruvate-flavodoxin oxidoreductase (1199 aa).

4Fe-4S ferredoxin-type domains follow at residues 699–728 (EIPV…AKVY) and 755–784 (FTIQ…EPSL). The [4Fe-4S] cluster site is built by C708, C711, C714, C718, C764, C767, C770, C774, C838, C841, C866, and C1103.

The protein belongs to the pyruvate:ferredoxin/flavodoxin oxidoreductase family. It depends on [4Fe-4S] cluster as a cofactor.

It catalyses the reaction oxidized [flavodoxin] + pyruvate + CoA + 2 H(+) = reduced [flavodoxin] + acetyl-CoA + CO2. Oxidoreductase required for the transfer of electrons from pyruvate to flavodoxin, which reduces nitrogenase. This chain is Pyruvate-flavodoxin oxidoreductase (nifJ), found in Nostoc sp. (strain PCC 7120 / SAG 25.82 / UTEX 2576).